The primary structure comprises 400 residues: S-adenosylmethionine sensor upstream of mTORC1 (400 aa).

S-adenosyl-L-methionine contacts are provided by Arg-99, Gly-168, Asp-186, Asp-198, Phe-199, and Ser-240.

This sequence belongs to the BMT2/SAMTOR family. In terms of assembly, interacts with the GATOR1 complex; interaction is disrupted when samtor binds S-adenosyl-L-methionine. Interacts with the KICSTOR complex; interaction is disrupted when samtor binds S-adenosyl-L-methionine.

S-adenosyl-L-methionine-binding protein that acts as an inhibitor of mTORC1 signaling via interaction with the GATOR1 and KICSTOR complexes. Acts as a sensor of S-adenosyl-L-methionine to signal methionine sufficiency to mTORC1: in presence of methionine, binds S-adenosyl-L-methionine, leading to disrupt interaction with the GATOR1 and KICSTOR complexes and promote mTORC1 signaling. Upon methionine starvation, S-adenosyl-L-methionine levels are reduced, thereby promoting the association with GATOR1 and KICSTOR, leading to inhibit mTORC1 signaling. Probably also acts as a S-adenosyl-L-methionine-dependent methyltransferase. In Xenopus tropicalis (Western clawed frog), this protein is S-adenosylmethionine sensor upstream of mTORC1.